Reading from the N-terminus, the 332-residue chain is Tetraacyldisaccharide 4'-kinase (332 aa).

53 to 60 (SVGGNGKT) contacts ATP.

Belongs to the LpxK family.

The enzyme catalyses a lipid A disaccharide + ATP = a lipid IVA + ADP + H(+). Its pathway is glycolipid biosynthesis; lipid IV(A) biosynthesis; lipid IV(A) from (3R)-3-hydroxytetradecanoyl-[acyl-carrier-protein] and UDP-N-acetyl-alpha-D-glucosamine: step 6/6. Transfers the gamma-phosphate of ATP to the 4'-position of a tetraacyldisaccharide 1-phosphate intermediate (termed DS-1-P) to form tetraacyldisaccharide 1,4'-bis-phosphate (lipid IVA). In Haemophilus influenzae (strain 86-028NP), this protein is Tetraacyldisaccharide 4'-kinase.